A 112-amino-acid chain; its full sequence is Cytochrome c (112 aa).

Positions 23, 26, 27, and 89 each coordinate heme c.

Belongs to the cytochrome c family. Post-translationally, binds 1 heme c group covalently per subunit.

It localises to the mitochondrion intermembrane space. Its function is as follows. Electron carrier protein. The oxidized form of the cytochrome c heme group can accept an electron from the heme group of the cytochrome c1 subunit of cytochrome reductase. Cytochrome c then transfers this electron to the cytochrome oxidase complex, the final protein carrier in the mitochondrial electron-transport chain. The protein is Cytochrome c (CYC1) of Chlamydomonas reinhardtii (Chlamydomonas smithii).